Reading from the N-terminus, the 148-residue chain is Ribosome maturation factor RimP (148 aa).

The protein belongs to the RimP family.

The protein resides in the cytoplasm. Functionally, required for maturation of 30S ribosomal subunits. This Treponema denticola (strain ATCC 35405 / DSM 14222 / CIP 103919 / JCM 8153 / KCTC 15104) protein is Ribosome maturation factor RimP.